Consider the following 88-residue polypeptide: Small ribosomal subunit protein bS20 (88 aa).

Residues 1-10 (MANHKSSLKR) are compositionally biased toward basic residues. The interval 1–24 (MANHKSSLKRAKQDIVRNTRNKSR) is disordered.

The protein belongs to the bacterial ribosomal protein bS20 family.

Functionally, binds directly to 16S ribosomal RNA. This chain is Small ribosomal subunit protein bS20, found in Desulfosudis oleivorans (strain DSM 6200 / JCM 39069 / Hxd3) (Desulfococcus oleovorans).